We begin with the raw amino-acid sequence, 186 residues long: Protein YABBY 2 (186 aa).

The segment at 17–44 (CNFCNTIFAVSVPSNSMLNIVTVRCGHC) adopts a C4-type zinc-finger fold.

It belongs to the YABBY family. As to expression, expressed in leaf blades, leaf sheaths and flowers.

Its subcellular location is the nucleus. The polypeptide is Protein YABBY 2 (YAB2) (Oryza sativa subsp. japonica (Rice)).